Here is a 266-residue protein sequence, read N- to C-terminus: MPDITLTTLQSLKQKGEKITMLTCYDATFAHTCCEAGVEVLLVGDSLGMVLQGHDSTLPVSTADMAYHVAAVKRGNNGALILADLPFMSYATTEQALSSSAQLMQAGAHMLKIEGAAWLAEPVRLLNERGVPVCVHMGLTPQTVNVLGGYKVQGRNESQARQMRADAIALEQAGAAMLLLECVPSELAAEITQAVKIPVIGIGAGNATDGQVLVLHDMLGLSLSGRSPKFVKNFMAGKDSIQAALSAYVEEVKAVTFPGAEHGFSA.

Residues Asp-45 and Asp-84 each coordinate Mg(2+). 3-methyl-2-oxobutanoate is bound by residues 45-46 (DS), Asp-84, and Lys-112. Position 114 (Glu-114) interacts with Mg(2+). Glu-181 (proton acceptor) is an active-site residue.

It belongs to the PanB family. As to quaternary structure, homodecamer; pentamer of dimers. Mg(2+) serves as cofactor.

The protein localises to the cytoplasm. The catalysed reaction is 3-methyl-2-oxobutanoate + (6R)-5,10-methylene-5,6,7,8-tetrahydrofolate + H2O = 2-dehydropantoate + (6S)-5,6,7,8-tetrahydrofolate. It functions in the pathway cofactor biosynthesis; (R)-pantothenate biosynthesis; (R)-pantoate from 3-methyl-2-oxobutanoate: step 1/2. In terms of biological role, catalyzes the reversible reaction in which hydroxymethyl group from 5,10-methylenetetrahydrofolate is transferred onto alpha-ketoisovalerate to form ketopantoate. This chain is 3-methyl-2-oxobutanoate hydroxymethyltransferase 2, found in Pseudomonas fluorescens (strain ATCC BAA-477 / NRRL B-23932 / Pf-5).